The primary structure comprises 445 residues: Phosphoglucosamine mutase (445 aa).

S102 (phosphoserine intermediate) is an active-site residue. 4 residues coordinate Mg(2+): S102, D241, D243, and D245. At S102 the chain carries Phosphoserine.

Belongs to the phosphohexose mutase family. Mg(2+) serves as cofactor. Post-translationally, activated by phosphorylation.

The catalysed reaction is alpha-D-glucosamine 1-phosphate = D-glucosamine 6-phosphate. Its function is as follows. Catalyzes the conversion of glucosamine-6-phosphate to glucosamine-1-phosphate. This Shewanella denitrificans (strain OS217 / ATCC BAA-1090 / DSM 15013) protein is Phosphoglucosamine mutase.